The following is a 506-amino-acid chain: Trans-cinnamate 4-monooxygenase (506 aa).

The helical transmembrane segment at 3 to 23 threads the bilayer; sequence LLLLEKALLGLFAAAVVAIAV. Residues 213–218 and A306 contribute to the (E)-cinnamate site; that span reads RSRLAQ. C447 contacts heme.

It belongs to the cytochrome P450 family. Requires heme as cofactor.

It localises to the membrane. The catalysed reaction is (E)-cinnamate + reduced [NADPH--hemoprotein reductase] + O2 = (E)-4-coumarate + oxidized [NADPH--hemoprotein reductase] + H2O + H(+). Its pathway is phenylpropanoid metabolism; trans-4-coumarate biosynthesis; trans-4-coumarate from trans-cinnamate: step 1/1. Its function is as follows. Catalyzes the first oxidative step of the phenylpropanoid pathway in higher plants by transforming trans-cinnamate into p-coumarate. The compounds formed by this pathway are essential components for lignification, pollination, and defense against ultraviolet light, predators and pathogens. The chain is Trans-cinnamate 4-monooxygenase (CYP73A2) from Ruta graveolens (Common rue).